A 100-amino-acid polypeptide reads, in one-letter code: Urease subunit gamma (100 aa).

The protein belongs to the urease gamma subunit family. As to quaternary structure, heterotrimer of UreA (gamma), UreB (beta) and UreC (alpha) subunits. Three heterotrimers associate to form the active enzyme.

The protein localises to the cytoplasm. It catalyses the reaction urea + 2 H2O + H(+) = hydrogencarbonate + 2 NH4(+). It functions in the pathway nitrogen metabolism; urea degradation; CO(2) and NH(3) from urea (urease route): step 1/1. In Pseudomonas putida (strain W619), this protein is Urease subunit gamma.